Consider the following 441-residue polypeptide: Glutamate-1-semialdehyde 2,1-aminomutase (441 aa).

At lysine 275 the chain carries N6-(pyridoxal phosphate)lysine.

This sequence belongs to the class-III pyridoxal-phosphate-dependent aminotransferase family. HemL subfamily. As to quaternary structure, homodimer. Requires pyridoxal 5'-phosphate as cofactor.

It localises to the cytoplasm. The catalysed reaction is (S)-4-amino-5-oxopentanoate = 5-aminolevulinate. The protein operates within porphyrin-containing compound metabolism; protoporphyrin-IX biosynthesis; 5-aminolevulinate from L-glutamyl-tRNA(Glu): step 2/2. This is Glutamate-1-semialdehyde 2,1-aminomutase from Deinococcus deserti (strain DSM 17065 / CIP 109153 / LMG 22923 / VCD115).